Here is a 489-residue protein sequence, read N- to C-terminus: L-asparagine permease 1 (489 aa).

Transmembrane regions (helical) follow at residues 25–45 (QLQMIGIGGAIGTGLFLGAGG), 49–69 (KAGPGLFLVYGVCGVFVFLIL), 100–120 (AVGWMYFLHWAMTSIVDTTAI), 137–157 (ILALIALTVVLSMNLISVEWF), 162–182 (FWAALIKVLALMAFLVVGTVF), 210–230 (WLPLLIVTSGVVFAYSAVELV), 255–275 (IAIFYVGSVALLALLLPYTAY), 289–309 (IGFHGAGDLMNIVVLTAALSS), 344–364 (YGGIVLTAVITLFGVALNAFK), 369–389 (FEIVLNMSALGIIAGWATIVL), 413–433 (SPYSGYLTLLFLLVVLVTMAS), and 439–459 (TWTVATLIIVIPALTAGWYLV).

This sequence belongs to the amino acid-polyamine-organocation (APC) superfamily. Amino acid transporter (AAT) (TC 2.A.3.1) family.

It localises to the cell membrane. The chain is L-asparagine permease 1 (ansP1) from Mycobacterium tuberculosis (strain CDC 1551 / Oshkosh).